Here is an 86-residue protein sequence, read N- to C-terminus: uncharacterized protein (86 aa).

It to C.jejuni CJ0253.

This is an uncharacterized protein from Helicobacter pylori (strain ATCC 700392 / 26695) (Campylobacter pylori).